The sequence spans 1462 residues: DNA polymerase III PolC-type (1462 aa).

Residues 424-580 form the Exonuclease domain; the sequence is YVVFDVETTG…YDAEATGRLL (157 aa).

The protein belongs to the DNA polymerase type-C family. PolC subfamily.

Its subcellular location is the cytoplasm. The catalysed reaction is DNA(n) + a 2'-deoxyribonucleoside 5'-triphosphate = DNA(n+1) + diphosphate. Its function is as follows. Required for replicative DNA synthesis. This DNA polymerase also exhibits 3' to 5' exonuclease activity. The sequence is that of DNA polymerase III PolC-type from Streptococcus sanguinis (strain SK36).